We begin with the raw amino-acid sequence, 205 residues long: ATP-dependent Clp protease proteolytic subunit (205 aa).

The active-site Nucleophile is the Ser-109. The active site involves His-134.

The protein belongs to the peptidase S14 family. Fourteen ClpP subunits assemble into 2 heptameric rings which stack back to back to give a disk-like structure with a central cavity, resembling the structure of eukaryotic proteasomes.

It localises to the cytoplasm. It catalyses the reaction Hydrolysis of proteins to small peptides in the presence of ATP and magnesium. alpha-casein is the usual test substrate. In the absence of ATP, only oligopeptides shorter than five residues are hydrolyzed (such as succinyl-Leu-Tyr-|-NHMec, and Leu-Tyr-Leu-|-Tyr-Trp, in which cleavage of the -Tyr-|-Leu- and -Tyr-|-Trp bonds also occurs).. In terms of biological role, cleaves peptides in various proteins in a process that requires ATP hydrolysis. Has a chymotrypsin-like activity. Plays a major role in the degradation of misfolded proteins. The polypeptide is ATP-dependent Clp protease proteolytic subunit (Baumannia cicadellinicola subsp. Homalodisca coagulata).